A 339-amino-acid chain; its full sequence is Dihydroorotate dehydrogenase (quinone) (339 aa).

FMN-binding positions include 62–66 and Thr86; that span reads AGMDK. Lys66 is a binding site for substrate. Position 111–115 (111–115) interacts with substrate; the sequence is NRMGF. FMN is bound by residues Asn139 and Asn172. Asn172 is a substrate binding site. Ser175 acts as the Nucleophile in catalysis. Asn177 lines the substrate pocket. FMN-binding residues include Lys217 and Thr245. Residue 246–247 participates in substrate binding; sequence NT. FMN is bound by residues Gly268, Gly297, and 318 to 319; that span reads YS.

This sequence belongs to the dihydroorotate dehydrogenase family. Type 2 subfamily. In terms of assembly, monomer. FMN is required as a cofactor.

The protein localises to the cell membrane. The enzyme catalyses (S)-dihydroorotate + a quinone = orotate + a quinol. It functions in the pathway pyrimidine metabolism; UMP biosynthesis via de novo pathway; orotate from (S)-dihydroorotate (quinone route): step 1/1. Its function is as follows. Catalyzes the conversion of dihydroorotate to orotate with quinone as electron acceptor. The chain is Dihydroorotate dehydrogenase (quinone) from Shewanella pealeana (strain ATCC 700345 / ANG-SQ1).